We begin with the raw amino-acid sequence, 317 residues long: Lipoyl synthase (317 aa).

The segment at 1-22 (MVTVVNTLNRPRHPEKQNRPET) is disordered. Residues 12–22 (RHPEKQNRPET) show a composition bias toward basic and acidic residues. Cysteine 57, cysteine 62, cysteine 68, cysteine 83, cysteine 87, cysteine 90, and serine 296 together coordinate [4Fe-4S] cluster. In terms of domain architecture, Radical SAM core spans 69–285 (WEKKHATFMI…ETVAYAKGFL (217 aa)).

It belongs to the radical SAM superfamily. Lipoyl synthase family. The cofactor is [4Fe-4S] cluster.

The protein localises to the cytoplasm. The catalysed reaction is [[Fe-S] cluster scaffold protein carrying a second [4Fe-4S](2+) cluster] + N(6)-octanoyl-L-lysyl-[protein] + 2 oxidized [2Fe-2S]-[ferredoxin] + 2 S-adenosyl-L-methionine + 4 H(+) = [[Fe-S] cluster scaffold protein] + N(6)-[(R)-dihydrolipoyl]-L-lysyl-[protein] + 4 Fe(3+) + 2 hydrogen sulfide + 2 5'-deoxyadenosine + 2 L-methionine + 2 reduced [2Fe-2S]-[ferredoxin]. It participates in protein modification; protein lipoylation via endogenous pathway; protein N(6)-(lipoyl)lysine from octanoyl-[acyl-carrier-protein]: step 2/2. Catalyzes the radical-mediated insertion of two sulfur atoms into the C-6 and C-8 positions of the octanoyl moiety bound to the lipoyl domains of lipoate-dependent enzymes, thereby converting the octanoylated domains into lipoylated derivatives. The polypeptide is Lipoyl synthase (Azorhizobium caulinodans (strain ATCC 43989 / DSM 5975 / JCM 20966 / LMG 6465 / NBRC 14845 / NCIMB 13405 / ORS 571)).